We begin with the raw amino-acid sequence, 555 residues long: Oxamate carbamoyltransferase subunit AllF (555 aa).

Belongs to the AllF family. The OXTCase is composed of 3 subunits, AllF, AllG and AllH. Mg(2+) is required as a cofactor.

It carries out the reaction oxamate + carbamoyl phosphate = N-carbamoyl-2-oxoglycine + phosphate. The protein operates within nitrogen metabolism; (S)-allantoin degradation. In terms of biological role, component of a carbamoyltransferase involved in the anaerobic nitrogen utilization via the assimilation of allantoin. Catalyzes the conversion of oxalurate (N-carbamoyl-2-oxoglycine) to oxamate and carbamoyl phosphate. The sequence is that of Oxamate carbamoyltransferase subunit AllF from Escherichia coli (strain K12).